The following is a 180-amino-acid chain: Mitochondrial membrane protein FMP33 (180 aa).

Transmembrane regions (helical) follow at residues 34 to 54 (LYTS…LYLE), 121 to 141 (FSIV…STLG), and 145 to 165 (ILYK…YMAL).

The protein resides in the mitochondrion membrane. The polypeptide is Mitochondrial membrane protein FMP33 (FMP33) (Saccharomyces cerevisiae (strain ATCC 204508 / S288c) (Baker's yeast)).